Consider the following 238-residue polypeptide: 2,3-bisphosphoglycerate-dependent phosphoglycerate mutase (238 aa).

Substrate is bound by residues 8 to 15 (RHGQSEWN), 21 to 22 (TG), Arg-60, 86 to 89 (ERHY), Lys-97, 113 to 114 (RR), and 182 to 183 (GN). The active-site Tele-phosphohistidine intermediate is the His-9. Residue Glu-86 is the Proton donor/acceptor of the active site.

The protein belongs to the phosphoglycerate mutase family. BPG-dependent PGAM subfamily. In terms of assembly, homodimer.

It catalyses the reaction (2R)-2-phosphoglycerate = (2R)-3-phosphoglycerate. It participates in carbohydrate degradation; glycolysis; pyruvate from D-glyceraldehyde 3-phosphate: step 3/5. In terms of biological role, catalyzes the interconversion of 2-phosphoglycerate and 3-phosphoglycerate. The polypeptide is 2,3-bisphosphoglycerate-dependent phosphoglycerate mutase (Pelagibacter ubique (strain HTCC1062)).